The following is a 260-amino-acid chain: Large ribosomal subunit protein uL30 (260 aa).

Methionine 1 bears the N-acetylmethionine mark. A run of 5 repeats spans residues 7-18, 19-30, 31-42, 43-54, and 55-66. The 5 X 12 AA tandem repeats stretch occupies residues 7-66; the sequence is KKKKVAAALGTLKKKKVPAVPETLKKKRRNFAELKVKRLRKKFALKTLRKARRKLIYEKA. Threonine 29 bears the Phosphothreonine mark. Lysine 136 carries the N6-acetyllysine modification. Position 139 is an N6-succinyllysine (lysine 139). Tyrosine 151 carries the phosphotyrosine modification.

It belongs to the universal ribosomal protein uL30 family. Component of the large ribosomal subunit. Homodimer. Interacts with DHX33.

It is found in the cytoplasm. In terms of biological role, component of the large ribosomal subunit. The ribosome is a large ribonucleoprotein complex responsible for the synthesis of proteins in the cell. Binds to G-rich structures in 28S rRNA and in mRNAs. Plays a regulatory role in the translation apparatus; inhibits cell-free translation of mRNAs. This Rattus norvegicus (Rat) protein is Large ribosomal subunit protein uL30 (Rpl7).